The chain runs to 410 residues: Auxin-induced protein 5NG4 (410 aa).

Residues 1 to 16 are Cytoplasmic-facing; sequence MASNIMQRCNVFMSER. The chain crosses the membrane as a helical span at residues 17-37; sequence VKLHAAMLALQFGYAGFHIVS. The Extracellular portion of the chain corresponds to 38 to 47; sequence RAALNMGVSK. A helical membrane pass occupies residues 48 to 68; the sequence is VVFPVYRNILALMLIGPCAYF. Over 69-74 the chain is Cytoplasmic; sequence LEKKER. Residues 75 to 95 form a helical membrane-spanning segment; the sequence is PALTLSFLIQFFLLALCGITG. Residues 96 to 109 are Extracellular-facing; the sequence is QSRILSLRIVLHIP. The helical transmembrane segment at 110–130 threads the bilayer; it reads TFASAIQNSVPAITFIMAAAL. The Cytoplasmic segment spans residues 131-141; sequence RLEKVHISRRD. A helical membrane pass occupies residues 142–162; it reads GLAKIIGTVACVSGATIITLY. Over 163–196 the chain is Extracellular; it reads KGPPITHIWRPNLEVTASYFKAFQGNDLSAKSEN. Asn196 carries N-linked (GlcNAc...) asparagine glycosylation. The chain crosses the membrane as a helical span at residues 197–217; the sequence is WTLGCIYLLGNCLAWSGWIVL. The EamA domain occupies 209-338; it reads LAWSGWIVLQ…IIIGLYLVLW (130 aa). The Cytoplasmic portion of the chain corresponds to 218 to 229; the sequence is QAPVLKRYPARL. The chain crosses the membrane as a helical span at residues 230–250; the sequence is SVTSFTCFFGVIQFLIIAAFF. Topologically, residues 251 to 264 are extracellular; that stretch reads ETDLEHWKIHSGGE. Residues 265–285 form a helical membrane-spanning segment; that stretch reads LFTILYAGFVASGIAFSVQIW. Over 286–292 the chain is Cytoplasmic; sequence CIDRGGP. The helical transmembrane segment at 293-313 threads the bilayer; that stretch reads VFVAVYQPVQTIAVAIMASII. Residues 314–317 lie on the Extracellular side of the membrane; that stretch reads LGEQ. A helical transmembrane segment spans residues 318–338; it reads FYLGGIFGAILIIIGLYLVLW. At 339–410 the chain is on the cytoplasmic side; the sequence is GKSEEKRLGL…IPSPSDEPQP (72 aa).

It belongs to the drug/metabolite transporter (DMT) superfamily. Plant drug/metabolite exporter (P-DME) (TC 2.A.7.4) family.

It localises to the membrane. The protein is Auxin-induced protein 5NG4 of Pinus taeda (Loblolly pine).